Consider the following 222-residue polypeptide: Phosphoglycolate phosphatase (222 aa).

Catalysis depends on D8, which acts as the Nucleophile. The Mg(2+) site is built by D8 and D10. K150 lines the substrate pocket. D173 and D177 together coordinate Mg(2+).

Belongs to the archaeal SPP-like hydrolase family. Mg(2+) is required as a cofactor.

It catalyses the reaction 2-phosphoglycolate + H2O = glycolate + phosphate. Catalyzes the dephosphorylation of 2-phosphoglycolate. This is Phosphoglycolate phosphatase from Metallosphaera sedula (strain ATCC 51363 / DSM 5348 / JCM 9185 / NBRC 15509 / TH2).